The sequence spans 261 residues: Beta cell expansion factor A (261 aa).

Positions 1–21 are cleaved as a signal peptide; it reads MNKRNWLLALSLSLAFSPCYA. The SYLF domain stretch occupies residues 99 to 261; sequence KTAKEARIAI…IDKDLTETSR (163 aa).

It is found in the secreted. Its subcellular location is the host. Stimulates the proliferation of insulin-producing beta cells during development in gnotobiotic zebrafish and mice. BefA is a microbiome-derived protein that traffics from the host intestinal lumen to the pancreas to act directly on pancreatic islets. In pancreas, interacts directly with host beta cells and elicits their proliferation via a mechanism of increasing membrane permeabilization. Can also permeabilize bacterial cell membranes, but does not show killing of target bacteria. The sequence is that of Beta cell expansion factor A from Aeromonas veronii.